The sequence spans 268 residues: Small ribosomal subunit protein eS1 (268 aa).

Belongs to the eukaryotic ribosomal protein eS1 family. As to quaternary structure, component of the small ribosomal subunit. Mature ribosomes consist of a small (40S) and a large (60S) subunit. The 40S subunit contains about 33 different proteins and 1 molecule of RNA (18S). The 60S subunit contains about 49 different proteins and 3 molecules of RNA (28S, 5.8S and 5S).

The protein resides in the cytoplasm. The protein is Small ribosomal subunit protein eS1 of Artemia franciscana (Brine shrimp).